The chain runs to 382 residues: Histidinol-phosphate aminotransferase (382 aa).

Lysine 215 carries the N6-(pyridoxal phosphate)lysine modification. Residues asparagine 363–isoleucine 382 form a disordered region.

This sequence belongs to the class-II pyridoxal-phosphate-dependent aminotransferase family. Histidinol-phosphate aminotransferase subfamily. In terms of assembly, homodimer. Pyridoxal 5'-phosphate serves as cofactor.

The catalysed reaction is L-histidinol phosphate + 2-oxoglutarate = 3-(imidazol-4-yl)-2-oxopropyl phosphate + L-glutamate. The protein operates within amino-acid biosynthesis; L-histidine biosynthesis; L-histidine from 5-phospho-alpha-D-ribose 1-diphosphate: step 7/9. This is Histidinol-phosphate aminotransferase from Yersinia pestis bv. Antiqua (strain Antiqua).